Reading from the N-terminus, the 404-residue chain is Arginine biosynthesis bifunctional protein ArgJ (404 aa).

Substrate is bound by residues threonine 166, lysine 189, threonine 200, glutamate 280, asparagine 399, and serine 404. Threonine 200 acts as the Nucleophile in catalysis.

Belongs to the ArgJ family. Heterotetramer of two alpha and two beta chains.

The protein localises to the cytoplasm. The enzyme catalyses N(2)-acetyl-L-ornithine + L-glutamate = N-acetyl-L-glutamate + L-ornithine. It catalyses the reaction L-glutamate + acetyl-CoA = N-acetyl-L-glutamate + CoA + H(+). The protein operates within amino-acid biosynthesis; L-arginine biosynthesis; L-ornithine and N-acetyl-L-glutamate from L-glutamate and N(2)-acetyl-L-ornithine (cyclic): step 1/1. It participates in amino-acid biosynthesis; L-arginine biosynthesis; N(2)-acetyl-L-ornithine from L-glutamate: step 1/4. In terms of biological role, catalyzes two activities which are involved in the cyclic version of arginine biosynthesis: the synthesis of N-acetylglutamate from glutamate and acetyl-CoA as the acetyl donor, and of ornithine by transacetylation between N(2)-acetylornithine and glutamate. The chain is Arginine biosynthesis bifunctional protein ArgJ from Mycolicibacterium paratuberculosis (strain ATCC BAA-968 / K-10) (Mycobacterium paratuberculosis).